A 267-amino-acid polypeptide reads, in one-letter code: uncharacterized protein (267 aa).

The ABC transporter domain maps to 2 to 198; it reads LGANGAGKTT…FRNKFIVIEG (197 aa). ATP is bound at residue 3–10; it reads GANGAGKT.

This sequence belongs to the ABC transporter superfamily.

This is an uncharacterized protein from Alkalihalophilus pseudofirmus (strain ATCC BAA-2126 / JCM 17055 / OF4) (Bacillus pseudofirmus).